A 247-amino-acid polypeptide reads, in one-letter code: Protein NipSnap homolog 3A (247 aa).

N6-acetyllysine occurs at positions 48 and 166.

Belongs to the NipSnap family. Interacts with the Salmonella typhimurium virulence protein spiC. As to expression, ubiquitous. Highly expressed in liver, kidney and muscle. Expressed at intermediate level in brain, heart, colon, thymus, kidney, small intestine, placenta, lung, leukocytes and spleen.

It localises to the cytoplasm. The protein resides in the cytosol. The chain is Protein NipSnap homolog 3A (NIPSNAP3A) from Homo sapiens (Human).